Here is a 343-residue protein sequence, read N- to C-terminus: Protein RecA (343 aa).

66 to 73 (GPESSGKT) serves as a coordination point for ATP. Positions 319–343 (IERQIREKHLPKRSAKADEAESAEA) are disordered.

This sequence belongs to the RecA family.

It localises to the cytoplasm. Its function is as follows. Can catalyze the hydrolysis of ATP in the presence of single-stranded DNA, the ATP-dependent uptake of single-stranded DNA by duplex DNA, and the ATP-dependent hybridization of homologous single-stranded DNAs. It interacts with LexA causing its activation and leading to its autocatalytic cleavage. This chain is Protein RecA, found in Thioalkalivibrio sulfidiphilus (strain HL-EbGR7).